The following is a 379-amino-acid chain: Cobalt-precorrin-5B C(1)-methyltransferase (379 aa).

This sequence belongs to the CbiD family.

It carries out the reaction Co-precorrin-5B + S-adenosyl-L-methionine = Co-precorrin-6A + S-adenosyl-L-homocysteine. The protein operates within cofactor biosynthesis; adenosylcobalamin biosynthesis; cob(II)yrinate a,c-diamide from sirohydrochlorin (anaerobic route): step 6/10. Its function is as follows. Catalyzes the methylation of C-1 in cobalt-precorrin-5B to form cobalt-precorrin-6A. In Klebsiella pneumoniae subsp. pneumoniae (strain ATCC 700721 / MGH 78578), this protein is Cobalt-precorrin-5B C(1)-methyltransferase.